The following is a 196-amino-acid chain: Glycerol-3-phosphate acyltransferase (196 aa).

Transmembrane regions (helical) follow at residues 1–21, 53–73, 78–98, 112–132, and 152–172; these read MIILAALLAYILGSVPFGYLT, AITAIGDVGKGMLAVYIGSLL, GALVASFFVVIGHAYSIFLKF, IMTSIKVTVVVFFIWLTVMLI, and LLFGLDLSYIYLGIFLAVMIF.

This sequence belongs to the PlsY family. In terms of assembly, probably interacts with PlsX.

The protein localises to the cell membrane. The enzyme catalyses an acyl phosphate + sn-glycerol 3-phosphate = a 1-acyl-sn-glycero-3-phosphate + phosphate. It participates in lipid metabolism; phospholipid metabolism. In terms of biological role, catalyzes the transfer of an acyl group from acyl-phosphate (acyl-PO(4)) to glycerol-3-phosphate (G3P) to form lysophosphatidic acid (LPA). This enzyme utilizes acyl-phosphate as fatty acyl donor, but not acyl-CoA or acyl-ACP. This chain is Glycerol-3-phosphate acyltransferase, found in Carboxydothermus hydrogenoformans (strain ATCC BAA-161 / DSM 6008 / Z-2901).